The chain runs to 254 residues: MQYQVDTHTHTVASSHAYSTIHDYIAVAKQKGIRLFANTDHGPAMADAPHFWHFVNLRVLPRMVDGVGILRGIEANIKNIDGEIDFFGDYLKQLDIVLAGFHEPVYPPSDKATHTEAMINAIKSGKVDIITHPGNPAYPIDIEAVARAAAEYGVALEINNSSFEVSRKGSEANCTAIAKAAKEFGTILVMGSDSHVAFSLGGFARAQAIIDEVAYPPSRLLNRSPSALLAFLAARGHETVADLIPLFSDDEPCC.

Zn(2+)-binding residues include histidine 8, histidine 10, histidine 16, histidine 41, glutamate 74, histidine 102, histidine 132, aspartate 193, and histidine 195.

It belongs to the PHP family. Requires Zn(2+) as cofactor.

This chain is Probable phosphatase Sbal223_2880, found in Shewanella baltica (strain OS223).